The chain runs to 207 residues: Uracil phosphoribosyltransferase (207 aa).

Residues Arg77, Arg102, and 129-137 (DPMLATGGS) each bind 5-phospho-alpha-D-ribose 1-diphosphate. Uracil contacts are provided by residues Ile192 and 197–199 (GDA). Residue Asp198 participates in 5-phospho-alpha-D-ribose 1-diphosphate binding.

Belongs to the UPRTase family. Mg(2+) is required as a cofactor.

It carries out the reaction UMP + diphosphate = 5-phospho-alpha-D-ribose 1-diphosphate + uracil. Its pathway is pyrimidine metabolism; UMP biosynthesis via salvage pathway; UMP from uracil: step 1/1. Its activity is regulated as follows. Allosterically activated by GTP. Its function is as follows. Catalyzes the conversion of uracil and 5-phospho-alpha-D-ribose 1-diphosphate (PRPP) to UMP and diphosphate. The protein is Uracil phosphoribosyltransferase of Mycobacterium marinum (strain ATCC BAA-535 / M).